Reading from the N-terminus, the 94-residue chain is Small ribosomal subunit protein uS19c (94 aa).

The protein belongs to the universal ribosomal protein uS19 family.

Its subcellular location is the plastid. The protein localises to the chloroplast. In terms of biological role, protein S19 forms a complex with S13 that binds strongly to the 16S ribosomal RNA. In Euglena gracilis, this protein is Small ribosomal subunit protein uS19c (rps19).